The following is a 225-amino-acid chain: MTYNELIYMVLDELKLSSDDSYYTPDHVIFLLVKYRSFLLKQRYSDIKKQIPDSDYQSICLDLIEVPAISGEPCEGSSYLRSKNKVPTTMMIGNPRVYPMDFYQGEITYISRDRMRYVGYNKFLRNIIYCSKAPDGYLYFKSWNPQFLHLEKVSFNAIFEDAKEASEMACPEENGTICKLEDKEFPIEDALVPPLIELVVKELRGPEYSPKDEDNNAKDDLPDAR.

A disordered region spans residues 206–225; it reads PEYSPKDEDNNAKDDLPDAR.

In terms of assembly, homododecamer.

Its subcellular location is the virion. Functionally, forms the tail multi-ring barrel with ring protein 1, ring protein 3 and ring protein 4. The sequence is that of Ring protein 2 from Bacteroides intestinalis (Bacteroides phage PhiCrAss001).